The primary structure comprises 551 residues: Probable NADH-ubiquinone oxidoreductase C3A11.07, mitochondrial (551 aa).

A mitochondrion-targeting transit peptide spans 1 to 37; sequence MLFSRSILRGMPKAGIPKSPLALSASRNLRLANSVRF. An FAD-binding site is contributed by 93 to 123; sequence TLVVLGAGWGATSILRTIDTSLFNVIVVSPR. 255-291 provides a ligand contact to NAD(+); sequence VHTVVVGGGPTGMEFAGEMADFIEDDLKSWYPELADD.

This sequence belongs to the NADH dehydrogenase family.

The protein localises to the mitochondrion. It catalyses the reaction a quinone + NADH + H(+) = a quinol + NAD(+). The enzyme catalyses a ubiquinone + NADH + H(+) = a ubiquinol + NAD(+). Its function is as follows. Catalyzes the oxidation of NADH. The chain is Probable NADH-ubiquinone oxidoreductase C3A11.07, mitochondrial from Schizosaccharomyces pombe (strain 972 / ATCC 24843) (Fission yeast).